Reading from the N-terminus, the 294-residue chain is Beta-lactamase (294 aa).

Positions methionine 1–alanine 30 are cleaved as a signal peptide. Serine 75 acts as the Acyl-ester intermediate in catalysis. Substrate is bound at residue lysine 239–glycine 241.

It belongs to the class-A beta-lactamase family.

The catalysed reaction is a beta-lactam + H2O = a substituted beta-amino acid. This is Beta-lactamase (blaA) from Yersinia enterocolitica.